We begin with the raw amino-acid sequence, 496 residues long: UDP-N-acetylmuramoyl-L-alanyl-D-glutamate--2,6-diaminopimelate ligase (496 aa).

Ser32 contributes to the UDP-N-acetyl-alpha-D-muramoyl-L-alanyl-D-glutamate binding site. 116-122 (GTNGKTT) serves as a coordination point for ATP. Residues 158–159 (TT), Ser185, Gln191, and Arg193 each bind UDP-N-acetyl-alpha-D-muramoyl-L-alanyl-D-glutamate. Lys225 is subject to N6-carboxylysine. Meso-2,6-diaminopimelate is bound by residues Arg389, 413–416 (DNPR), Gly464, and Glu468. Residues 413–416 (DNPR) carry the Meso-diaminopimelate recognition motif motif.

Belongs to the MurCDEF family. MurE subfamily. It depends on Mg(2+) as a cofactor. In terms of processing, carboxylation is probably crucial for Mg(2+) binding and, consequently, for the gamma-phosphate positioning of ATP.

The protein localises to the cytoplasm. It carries out the reaction UDP-N-acetyl-alpha-D-muramoyl-L-alanyl-D-glutamate + meso-2,6-diaminopimelate + ATP = UDP-N-acetyl-alpha-D-muramoyl-L-alanyl-gamma-D-glutamyl-meso-2,6-diaminopimelate + ADP + phosphate + H(+). It functions in the pathway cell wall biogenesis; peptidoglycan biosynthesis. Its function is as follows. Catalyzes the addition of meso-diaminopimelic acid to the nucleotide precursor UDP-N-acetylmuramoyl-L-alanyl-D-glutamate (UMAG) in the biosynthesis of bacterial cell-wall peptidoglycan. This chain is UDP-N-acetylmuramoyl-L-alanyl-D-glutamate--2,6-diaminopimelate ligase, found in Trichormus variabilis (strain ATCC 29413 / PCC 7937) (Anabaena variabilis).